The following is a 349-amino-acid chain: Ferredoxin--NADP reductase 1 (349 aa).

FAD contacts are provided by Glu-36, Lys-44, Tyr-48, Val-88, Leu-123, Asp-290, and Ser-331.

Belongs to the ferredoxin--NADP reductase type 2 family. In terms of assembly, homodimer. Requires FAD as cofactor.

It carries out the reaction 2 reduced [2Fe-2S]-[ferredoxin] + NADP(+) + H(+) = 2 oxidized [2Fe-2S]-[ferredoxin] + NADPH. This chain is Ferredoxin--NADP reductase 1, found in Bacillus cytotoxicus (strain DSM 22905 / CIP 110041 / 391-98 / NVH 391-98).